Consider the following 470-residue polypeptide: UTP--glucose-1-phosphate uridylyltransferase 1 (470 aa).

The residue at position 2 (Ala-2) is an N-acetylalanine. UTP-binding positions include 86 to 89 (LNGG), Lys-100, Gln-163, and Gly-192. 88–89 (GG) provides a ligand contact to substrate. Substrate-binding positions include His-193 and 221–223 (NSD). Residues Asp-223 and Lys-361 each coordinate UTP.

The protein belongs to the UDPGP type 1 family. As to expression, expressed in roots, rosette leaves, cauline leaves, stems, flowers and siliques.

Its subcellular location is the cytoplasm. It carries out the reaction alpha-D-glucose 1-phosphate + UTP + H(+) = UDP-alpha-D-glucose + diphosphate. In terms of biological role, converts glucose 1-phosphate to UDP-glucose, which is the major glycosyl donor for polysaccharides. Acts redundantly with UGP2 and is essential for the synthesis of sucrose, starch and cell wall, and callose deposition. Involved in the regulation of the programmed cell death (PCD) induced by the fungal toxin fumonisin B1 (FB1). The protein is UTP--glucose-1-phosphate uridylyltransferase 1 of Arabidopsis thaliana (Mouse-ear cress).